Here is a 615-residue protein sequence, read N- to C-terminus: Coagulation factor XII (615 aa).

The N-terminal stretch at 1–19 (MRALLLLGFLLVSLESTLS) is a signal peptide. The Fibronectin type-II domain maps to 42-90 (VTGEPCHFPFQYHRQLYHKCTHKGRPGPQPWCATTPNFDQDQRWGYCLE). 13 disulfides stabilise this stretch: Cys47–Cys73, Cys61–Cys88, Cys98–Cys110, Cys104–Cys119, Cys121–Cys130, Cys135–Cys163, Cys161–Cys170, Cys178–Cys189, Cys183–Cys198, Cys200–Cys209, Cys217–Cys295, Cys238–Cys277, and Cys266–Cys290. In terms of domain architecture, EGF-like 1 spans 94-131 (VKDHCSKHSPCQKGGTCVNMPSGPHCLCPQHLTGNHCQ). Thr109 carries O-linked (Fuc) threonine glycosylation. The region spanning 133–173 (EKCFEPQLLRFFHKNEIWYRTEQAAVARCQCKGPDAHCQRL) is the Fibronectin type-I domain. An EGF-like 2 domain is found at 174 to 210 (ASQACRTNPCLHGGRCLEVEGHRLCHCPVGYTGAFCD). The Kringle domain occupies 217–295 (CYDGRGLSYR…SWEYCDLAQC (79 aa)). Asn249 carries N-linked (GlcNAc...) asparagine glycosylation. Residues 298–359 (PTQAAPPTPV…SLTRNGPLSC (62 aa)) are disordered. Thr299 and Thr305 each carry an O-linked (GalNAc...) threonine glycan. Ser308 carries O-linked (GalNAc...) serine glycosylation. The segment covering 317–326 (PAQPAPPKPQ) has biased composition (pro residues). Over residues 327–338 (PTTRTPPQSQTP) the composition is skewed to low complexity. O-linked (GalNAc...) threonine glycosylation is found at Thr328, Thr329, and Thr337. 7 cysteine pairs are disulfide-bonded: Cys359–Cys486, Cys397–Cys413, Cys405–Cys475, Cys436–Cys439, Cys500–Cys569, Cys532–Cys548, and Cys559–Cys590. The region spanning 373–614 (VVGGLVALRG…YLAWIREHTV (242 aa)) is the Peptidase S1 domain. The active-site Charge relay system is the His412. Asn433 carries an N-linked (GlcNAc...) asparagine glycan. Residue Asp461 is the Charge relay system of the active site. Catalysis depends on Ser563, which acts as the Charge relay system.

This sequence belongs to the peptidase S1 family. In terms of assembly, interacts with HRG; the interaction, which is enhanced in the presence of zinc ions and inhibited by heparin-binding, inhibits factor XII autoactivation and contact-initiated coagulation. Interacts (inactive and activated) with D7L2, an anticoagulant protein from Anopheles gambiae. Interacts (activated) with iripin-8, a serine protease inhibitor from Ixodes ricinus saliva. Interacts (inactive and activated) (via amino acids 1-77) with triafestin-1 and triafestin-2, anticoagulant proteins from Triatoma infestans. Interacts (inactive and activated) (via amino acids 1-77) with short form salivary protein D7R1, an anticoagulant protein from Anopheles stephensi. Interacts (inactive and activated) (via fibronectin type II domain) with haemaphysalin, an anticoagulant protein from Haemaphysalis longicornis. Factor XII is activated by kallikrein in alpha-factor XIIa, which is further converted by trypsin into beta-factor XIIa. Alpha-factor XIIa is composed of an NH2-terminal heavy chain, called coagulation factor XIIa heavy chain, and a COOH-terminal light chain, called coagulation factor XIIa light chain, connected by a disulfide bond. Beta-factor XIIa is composed of 2 chains linked by a disulfide bond, an N-terminal nonapeptide, called beta-factor XIIa part 1, and coagulation factor XIIa light chain, also known in this context as beta-factor XIIa part 2. Post-translationally, O- and N-glycosylated. The O-linked polysaccharides were not identified, but are probably the mucin type linked to GalNAc.

The protein resides in the secreted. The catalysed reaction is Selective cleavage of Arg-|-Ile bonds in factor VII to form factor VIIa and factor XI to form factor XIa.. Activity is promoted in the presence of negatively charged surfaces. In terms of biological role, factor XII is a serum glycoprotein that participates in the initiation of blood coagulation, fibrinolysis, and the generation of bradykinin and angiotensin. Prekallikrein is cleaved by factor XII to form kallikrein, which then cleaves factor XII first to alpha-factor XIIa and then trypsin cleaves it to beta-factor XIIa. Alpha-factor XIIa activates factor XI to factor XIa. The polypeptide is Coagulation factor XII (F12) (Homo sapiens (Human)).